A 330-amino-acid polypeptide reads, in one-letter code: Probable L-lactate dehydrogenase (330 aa).

The substrate site is built by Arg105, Asn137, and Arg168. An NAD(+)-binding site is contributed by Asn137. His192 serves as the catalytic Proton acceptor.

This sequence belongs to the LDH/MDH superfamily. LDH family. Homotetramer.

The protein localises to the cytoplasm. It catalyses the reaction (S)-lactate + NAD(+) = pyruvate + NADH + H(+). It participates in fermentation; pyruvate fermentation to lactate; (S)-lactate from pyruvate: step 1/1. This is Probable L-lactate dehydrogenase from Schizosaccharomyces pombe (strain 972 / ATCC 24843) (Fission yeast).